The primary structure comprises 278 residues: Urease accessory protein UreD (278 aa).

Belongs to the UreD family. UreD, UreF and UreG form a complex that acts as a GTP-hydrolysis-dependent molecular chaperone, activating the urease apoprotein by helping to assemble the nickel containing metallocenter of UreC. The UreE protein probably delivers the nickel.

The protein localises to the cytoplasm. Its function is as follows. Required for maturation of urease via the functional incorporation of the urease nickel metallocenter. In Leptothrix cholodnii (strain ATCC 51168 / LMG 8142 / SP-6) (Leptothrix discophora (strain SP-6)), this protein is Urease accessory protein UreD.